A 926-amino-acid polypeptide reads, in one-letter code: Mating-type protein A-alpha Y3 (926 aa).

Positions 147-206 (YKKPRPKFHSEYTPLLELYFHFNAYPTFADRRMLAEKTGMQTRQITVWFQNHRRRAKGPL) form a DNA-binding region, homeobox. 4 disordered regions span residues 238 to 281 (SHLR…KVGK), 308 to 374 (QQAP…TSSA), 424 to 452 (GKGK…SRLN), and 625 to 734 (RARK…MNES). 2 stretches are compositionally biased toward basic and acidic residues: residues 267–281 (KKPD…KVGK) and 326–338 (NAQD…ATKS). The span at 428–441 (PSQNLTSTPATFST) shows a compositional bias: polar residues. Residues 632-660 (KQAEKEARKEEKRARKEAKQAKKDRKEQR) show a composition bias toward basic and acidic residues. Low complexity-rich tracts occupy residues 669–687 (STLD…SATS) and 699–724 (SSAS…SGTS).

It is found in the nucleus. Functionally, specifies A-alpha-3 mating-type. May regulate the expression of genes specific to the homokaryotic cell type. The polypeptide is Mating-type protein A-alpha Y3 (Schizophyllum commune (Split gill fungus)).